A 392-amino-acid polypeptide reads, in one-letter code: Dihydroorotate dehydrogenase (quinone) (392 aa).

Residues 90–94 (AGFDK) and Thr114 contribute to the FMN site. A substrate-binding site is contributed by Lys94. 139-143 (NRMGF) contributes to the substrate binding site. The FMN site is built by Asn173 and Asn206. Asn206 serves as a coordination point for substrate. Catalysis depends on Ser209, which acts as the Nucleophile. Asn211 is a binding site for substrate. Residues Lys243 and Val271 each contribute to the FMN site. 272–273 (NT) serves as a coordination point for substrate. FMN is bound by residues Gly301, Gly330, and 351-352 (YT).

It belongs to the dihydroorotate dehydrogenase family. Type 2 subfamily. In terms of assembly, monomer. FMN serves as cofactor.

It localises to the cell membrane. The catalysed reaction is (S)-dihydroorotate + a quinone = orotate + a quinol. The protein operates within pyrimidine metabolism; UMP biosynthesis via de novo pathway; orotate from (S)-dihydroorotate (quinone route): step 1/1. Catalyzes the conversion of dihydroorotate to orotate with quinone as electron acceptor. This chain is Dihydroorotate dehydrogenase (quinone), found in Prochlorococcus marinus (strain MIT 9313).